The chain runs to 171 residues: Crossover junction endodeoxyribonuclease RuvC (171 aa).

Catalysis depends on residues Asp-7, Glu-66, and Asp-138. The Mg(2+) site is built by Asp-7, Glu-66, and Asp-138.

It belongs to the RuvC family. Homodimer which binds Holliday junction (HJ) DNA. The HJ becomes 2-fold symmetrical on binding to RuvC with unstacked arms; it has a different conformation from HJ DNA in complex with RuvA. In the full resolvosome a probable DNA-RuvA(4)-RuvB(12)-RuvC(2) complex forms which resolves the HJ. Mg(2+) is required as a cofactor.

The protein localises to the cytoplasm. It carries out the reaction Endonucleolytic cleavage at a junction such as a reciprocal single-stranded crossover between two homologous DNA duplexes (Holliday junction).. In terms of biological role, the RuvA-RuvB-RuvC complex processes Holliday junction (HJ) DNA during genetic recombination and DNA repair. Endonuclease that resolves HJ intermediates. Cleaves cruciform DNA by making single-stranded nicks across the HJ at symmetrical positions within the homologous arms, yielding a 5'-phosphate and a 3'-hydroxyl group; requires a central core of homology in the junction. The consensus cleavage sequence is 5'-(A/T)TT(C/G)-3'. Cleavage occurs on the 3'-side of the TT dinucleotide at the point of strand exchange. HJ branch migration catalyzed by RuvA-RuvB allows RuvC to scan DNA until it finds its consensus sequence, where it cleaves and resolves the cruciform DNA. This Francisella tularensis subsp. mediasiatica (strain FSC147) protein is Crossover junction endodeoxyribonuclease RuvC.